Consider the following 280-residue polypeptide: uncharacterized protein (280 aa).

Residues 1–10 (MSSSIKKLKK) show a composition bias toward basic residues. A disordered region spans residues 1 to 45 (MSSSIKKLKKDTKDTDKTPSKKIYQETHNSEDSEDSEDSDNENNT). Basic and acidic residues predominate over residues 11-31 (DTKDTDKTPSKKIYQETHNSE). Over residues 32-41 (DSEDSEDSDN) the composition is skewed to acidic residues.

This is an uncharacterized protein from Acanthamoeba polyphaga mimivirus (APMV).